The primary structure comprises 435 residues: 5-methylthioadenosine/S-adenosylhomocysteine deaminase (435 aa).

The Zn(2+) site is built by H65 and H67. 3 residues coordinate substrate: E94, R150, and H189. H216 serves as a coordination point for Zn(2+). Substrate is bound by residues E219 and D304. Residue D304 coordinates Zn(2+).

Belongs to the metallo-dependent hydrolases superfamily. MTA/SAH deaminase family. The cofactor is Zn(2+).

The enzyme catalyses S-adenosyl-L-homocysteine + H2O + H(+) = S-inosyl-L-homocysteine + NH4(+). It carries out the reaction S-methyl-5'-thioadenosine + H2O + H(+) = S-methyl-5'-thioinosine + NH4(+). Catalyzes the deamination of 5-methylthioadenosine and S-adenosyl-L-homocysteine into 5-methylthioinosine and S-inosyl-L-homocysteine, respectively. Is also able to deaminate adenosine. This is 5-methylthioadenosine/S-adenosylhomocysteine deaminase from Bacillus cereus (strain G9842).